The primary structure comprises 221 residues: Transcription factor HES-4 (221 aa).

A compositionally biased stretch (low complexity) spans 1–22; sequence MAADTPGKPSASPMAGAPASAS. The disordered stretch occupies residues 1–49; the sequence is MAADTPGKPSASPMAGAPASASRTPDKPRSAAEHRKSSKPVMEKRRRAR. Over residues 24-35 the composition is skewed to basic and acidic residues; it reads TPDKPRSAAEHR. Residues 34-91 enclose the bHLH domain; sequence HRKSSKPVMEKRRRARINESLAQLKTLILDALRKESSRHSKLEKADILEMTVRHLRSL. The Orange domain occupies 110–143; sequence YRAGFHECLAEVNRFLAGCEGVPADVRSRLLGHL. The interval 201–221 is disordered; that stretch reads LPAAPRAGPQGPGGPWRPWLR. A WRPW motif motif is present at residues 216 to 219; the sequence is WRPW.

In terms of assembly, transcription repression requires formation of a complex with a corepressor protein of the Groucho/TLE family.

The protein localises to the nucleus. Functionally, transcriptional repressor. Binds DNA on N-box motifs: 5'-CACNAG-3'. This is Transcription factor HES-4 (HES4) from Homo sapiens (Human).